Consider the following 334-residue polypeptide: MAGIASTVAVMGAGAWGTALAKVLADAGGEVTLWARRAEVADQINTTRYNPDYLPGALLPPSIHATADAEEALGGASTVLLGVPAQTMRANLERWAPLLPEGATLVSLAKGIELGTLMRMSQVIISVTGAEPAQVAVISGPNLASEIAECQPAATVVACSDSGRAVALQRALNSGYFRPYTNADVVGTEIGGACKNIIALACGMAVGIGLGENTAAAIITRGLAEIIRLGTALGANGATLAGLAGVGDLVATCTSPRSRNRSFGERLGRGETLQSAGKACHVVEGVTSCESVLALASSYDVEMPLTDAVHRVCHKGLSVDEAITLLLGRRTKPE.

Residues Trp16, Arg36, Arg37, and Lys110 each coordinate NADPH. 2 residues coordinate sn-glycerol 3-phosphate: Lys110 and Gly140. Ala144 is an NADPH binding site. Residues Lys195, Asp248, Ser258, Arg259, and Asn260 each contribute to the sn-glycerol 3-phosphate site. Lys195 acts as the Proton acceptor in catalysis. Arg259 contributes to the NADPH binding site. Val282 and Glu284 together coordinate NADPH.

This sequence belongs to the NAD-dependent glycerol-3-phosphate dehydrogenase family.

The protein localises to the cytoplasm. The catalysed reaction is sn-glycerol 3-phosphate + NAD(+) = dihydroxyacetone phosphate + NADH + H(+). The enzyme catalyses sn-glycerol 3-phosphate + NADP(+) = dihydroxyacetone phosphate + NADPH + H(+). Its pathway is membrane lipid metabolism; glycerophospholipid metabolism. Catalyzes the reduction of the glycolytic intermediate dihydroxyacetone phosphate (DHAP) to sn-glycerol 3-phosphate (G3P), the key precursor for phospholipid synthesis. In Mycobacterium bovis (strain ATCC BAA-935 / AF2122/97), this protein is Glycerol-3-phosphate dehydrogenase [NAD(P)+] 2.